The primary structure comprises 176 residues: NADH-quinone oxidoreductase subunit B 1 (176 aa).

[4Fe-4S] cluster is bound by residues Cys55, Cys56, Cys120, and Cys150.

This sequence belongs to the complex I 20 kDa subunit family. NDH-1 is composed of 14 different subunits. Subunits NuoB, C, D, E, F, and G constitute the peripheral sector of the complex. [4Fe-4S] cluster serves as cofactor.

It localises to the cell inner membrane. It catalyses the reaction a quinone + NADH + 5 H(+)(in) = a quinol + NAD(+) + 4 H(+)(out). In terms of biological role, NDH-1 shuttles electrons from NADH, via FMN and iron-sulfur (Fe-S) centers, to quinones in the respiratory chain. Couples the redox reaction to proton translocation (for every two electrons transferred, four hydrogen ions are translocated across the cytoplasmic membrane), and thus conserves the redox energy in a proton gradient. The chain is NADH-quinone oxidoreductase subunit B 1 from Cereibacter sphaeroides (strain ATCC 17029 / ATH 2.4.9) (Rhodobacter sphaeroides).